We begin with the raw amino-acid sequence, 1119 residues long: MDVDEIESAGQINISELGESFLQTFCKKAATSFFEEFGLISHQLNSYNFFIEHGLQNVFESFGDILVEPSFDVIKKKDGDWRYATVFKKIVIKHDKFKTGQDEYVEKEILDVKKQDILIGSIPVMVKSVLCKTSEKGKENCKKGNCAFDQGGYFVIKGAEKVFIAQEQMCTKRLWISNSPWTVSFRSETKRNRFIVRLSENEKAEDYKIMEKVLTVYFLSTEIPVWLLFFALGVSSDKEAMDLIAFDGDDASITNSLIASIHEADAVCEAFRCGNNALTYVEHQIKSTKFPPAESVDDCLRLYLFPCLQGLKKKARFLGYMVKCLLSAYAGKRKCENRDSFRNKRIELAGELLEREIRVHLAHARRKMTRAMQKQLSGDGDLKPIEHYLDASVITNGLNRAFSTGAWSHPFRKMERVSGVVANLGRANPLQTLIDLRRTRQQVLYTGKVGDARHPHPSHWGRVCFLSTPDGENCGLVKNMSLLGLVSTQGLESVVEMLFTCGMEELMNDTSTPLCGKHKVLLNGDWVGLCADSESFVGELKSRRRQSELPLEMEIKRDKDDNEVRIFTDAGRLLRPLLVVENLHKLKQDKPTQYPFKHLLDQGILELIGIEEEEDCTTAWGIKQLLKEPKNYTHCELDLSFLLGVSCAIVPFANHDHGKRVLYQSQKHCQQAIGFSSTNPNIRCDTLSQQLFYPQKPLFKTLASECLEKEVLFNGQNAIVAVNVHLGYNQEDSIVMNKASLERGMFRSEQIRSYKAEVDTKDSEKRKKMDELVQFGKTYSKIGKVDSLEDDGFPFIGANMSTGDIVIGRCTESGADHSIKLKHTERGIVQKVVLSSNDEGKNFAAVSLRQVRSPCLGDKFSSMHGQKGVLGYLEEQQNFPFTIQGIVPDIVINPHAFPSRQTPGQLLEAALSKGIACPIQKKEGSSAAYTKLTRHATPFSTPGVTEITEQLHRAGFSRWGNERVYNGRSGEMMRSLIFMGPTFYQRLVHMSENKVKFRNTGPVHPLTRQPVADRKRFGGIRFGEMERDCLIAHGASANLHERLFTLSDSSQMHICRKCKTYANVIERTPSSGRKIRGPYCRVCASSDHVVRVYVPYGAKLLCQELFSMGITLNFDTKLC.

Asp732 contacts Mg(2+). Residues Cys1055, Cys1058, Cys1080, and Cys1083 each contribute to the Zn(2+) site. The C4-type zinc-finger motif lies at 1055–1083 (CRKCKTYANVIERTPSSGRKIRGPYCRVC).

The protein belongs to the RNA polymerase beta chain family. Component of the RNA polymerase IVa and IVb (Pol IV) complexes.

The protein resides in the nucleus. The catalysed reaction is RNA(n) + a ribonucleoside 5'-triphosphate = RNA(n+1) + diphosphate. Functionally, DNA-dependent RNA polymerase catalyzes the transcription of DNA into RNA using the four ribonucleoside triphosphates as substrates. Second largest component of RNA polymerase IVa and IVb which mediate short-interfering RNAs (siRNA) accumulation and subsequent RNA-directed DNA methylation-dependent (RdDM) silencing of endogenous repeated sequences, including transposable largest subunit. Also required for full erasure of methylation elements. Required for intercellular RNA interference (RNAi) leading to systemic post-transcriptional gene silencing. This is DNA-directed RNA polymerase D subunit 2b (NRPD2b) from Arabidopsis thaliana (Mouse-ear cress).